Here is a 349-residue protein sequence, read N- to C-terminus: Protein RecA (349 aa).

An ATP-binding site is contributed by 65–72 (GPESSGKT).

It belongs to the RecA family.

Its subcellular location is the cytoplasm. In terms of biological role, can catalyze the hydrolysis of ATP in the presence of single-stranded DNA, the ATP-dependent uptake of single-stranded DNA by duplex DNA, and the ATP-dependent hybridization of homologous single-stranded DNAs. It interacts with LexA causing its activation and leading to its autocatalytic cleavage. This is Protein RecA from Azotobacter vinelandii.